The sequence spans 218 residues: uncharacterized protein (218 aa).

An N-terminal signal peptide occupies residues 1–17; that stretch reads MLKKIIILFLGIFLLSS. C18 carries N-palmitoyl cysteine lipidation. The S-diacylglycerol cysteine moiety is linked to residue C18. Residues 136–164 are a coiled coil; the sequence is YKEKKIEEELNQIKAMLKETKRDITKYTC.

Its subcellular location is the cell membrane. This is an uncharacterized protein from Rickettsia typhi (strain ATCC VR-144 / Wilmington).